The sequence spans 294 residues: Shikimate dehydrogenase (NADP(+)) (294 aa).

Shikimate-binding positions include Ser14–Ser16 and Thr61. The Proton acceptor role is filled by Lys65. Asp77 contacts NADP(+). Positions 86 and 102 each coordinate shikimate. Residues Gly140 to Ala144 and Leu235 contribute to the NADP(+) site. Tyr237 provides a ligand contact to shikimate. Gly259 is a binding site for NADP(+).

This sequence belongs to the shikimate dehydrogenase family. Homodimer.

The enzyme catalyses shikimate + NADP(+) = 3-dehydroshikimate + NADPH + H(+). The protein operates within metabolic intermediate biosynthesis; chorismate biosynthesis; chorismate from D-erythrose 4-phosphate and phosphoenolpyruvate: step 4/7. In terms of biological role, involved in the biosynthesis of the chorismate, which leads to the biosynthesis of aromatic amino acids. Catalyzes the reversible NADPH linked reduction of 3-dehydroshikimate (DHSA) to yield shikimate (SA). This is Shikimate dehydrogenase (NADP(+)) from Blochmanniella floridana.